A 382-amino-acid chain; its full sequence is Mannitol-1-phosphate 5-dehydrogenase (382 aa).

4 to 15 serves as a coordination point for NAD(+); that stretch reads AVHFGAGNIGRG.

It belongs to the mannitol dehydrogenase family.

It carries out the reaction D-mannitol 1-phosphate + NAD(+) = beta-D-fructose 6-phosphate + NADH + H(+). This is Mannitol-1-phosphate 5-dehydrogenase from Vibrio vulnificus (strain CMCP6).